A 313-amino-acid chain; its full sequence is Ribosomal RNA small subunit methyltransferase H (313 aa).

S-adenosyl-L-methionine contacts are provided by residues glycine 35–histidine 37, aspartate 55, phenylalanine 79, aspartate 101, and glutamine 108.

The protein belongs to the methyltransferase superfamily. RsmH family.

It is found in the cytoplasm. The enzyme catalyses cytidine(1402) in 16S rRNA + S-adenosyl-L-methionine = N(4)-methylcytidine(1402) in 16S rRNA + S-adenosyl-L-homocysteine + H(+). In terms of biological role, specifically methylates the N4 position of cytidine in position 1402 (C1402) of 16S rRNA. This chain is Ribosomal RNA small subunit methyltransferase H, found in Shigella dysenteriae serotype 1 (strain Sd197).